Here is a 147-residue protein sequence, read N- to C-terminus: Large ribosomal subunit protein bL9 (147 aa).

It belongs to the bacterial ribosomal protein bL9 family.

In terms of biological role, binds to the 23S rRNA. The chain is Large ribosomal subunit protein bL9 from Geotalea uraniireducens (strain Rf4) (Geobacter uraniireducens).